Consider the following 239-residue polypeptide: tRNA (guanine-N(7)-)-methyltransferase (239 aa).

Residues glutamate 69, glutamate 94, aspartate 121, and aspartate 144 each contribute to the S-adenosyl-L-methionine site. The active site involves aspartate 144. Substrate contacts are provided by residues lysine 148, aspartate 180, and 217-220; that span reads TKFE.

This sequence belongs to the class I-like SAM-binding methyltransferase superfamily. TrmB family.

The catalysed reaction is guanosine(46) in tRNA + S-adenosyl-L-methionine = N(7)-methylguanosine(46) in tRNA + S-adenosyl-L-homocysteine. It functions in the pathway tRNA modification; N(7)-methylguanine-tRNA biosynthesis. In terms of biological role, catalyzes the formation of N(7)-methylguanine at position 46 (m7G46) in tRNA. The chain is tRNA (guanine-N(7)-)-methyltransferase from Pseudoalteromonas atlantica (strain T6c / ATCC BAA-1087).